Consider the following 304-residue polypeptide: Quinolinate synthase 1 (304 aa).

Positions 24 and 41 each coordinate iminosuccinate. Residue Cys-86 participates in [4Fe-4S] cluster binding. Residues 112 to 114 and Ser-129 contribute to the iminosuccinate site; that span reads YVN. Cys-171 is a binding site for [4Fe-4S] cluster. Iminosuccinate-binding positions include 197-199 and Thr-214; that span reads HPE. Position 259 (Cys-259) interacts with [4Fe-4S] cluster.

The protein belongs to the quinolinate synthase family. Type 2 subfamily. It depends on [4Fe-4S] cluster as a cofactor.

It is found in the cytoplasm. The enzyme catalyses iminosuccinate + dihydroxyacetone phosphate = quinolinate + phosphate + 2 H2O + H(+). The protein operates within cofactor biosynthesis; NAD(+) biosynthesis; quinolinate from iminoaspartate: step 1/1. Its function is as follows. Catalyzes the condensation of iminoaspartate with dihydroxyacetone phosphate to form quinolinate. The protein is Quinolinate synthase 1 of Methanosarcina acetivorans (strain ATCC 35395 / DSM 2834 / JCM 12185 / C2A).